We begin with the raw amino-acid sequence, 578 residues long: CTP synthase 2 (578 aa).

Residues 305 to 564 (KIALVGKYTN…VAAASGTLGD (260 aa)) enclose the Glutamine amidotransferase type-1 domain. Catalysis depends on for GATase activity residues C404, H537, and E539.

Belongs to the CTP synthase family. Homodimer. Oligomerizes to a tetramer in the presence of its substrates UTP and ATP. It depends on Mg(2+) as a cofactor.

The protein localises to the cytoplasm. It carries out the reaction UTP + L-glutamine + ATP + H2O = CTP + L-glutamate + ADP + phosphate + 2 H(+). The protein operates within pyrimidine metabolism; CTP biosynthesis via de novo pathway; CTP from UDP: step 2/2. With respect to regulation, activated by GTP. Subject to allosteric product inhibition by CTP. Inhibited by p-chloromercuriphenylsulfonic acid, N-ethylmaleimide and cyclopentenylcytosine (CPEC). In terms of biological role, catalyzes the ATP-dependent amination of UTP to CTP with either L-glutamine or ammonia as the source of nitrogen. Plays an important role in the regulation of phospholipid synthesis. The chain is CTP synthase 2 (URA8) from Saccharomyces cerevisiae (strain YJM789) (Baker's yeast).